A 582-amino-acid polypeptide reads, in one-letter code: Beta-glucosidase 28 (582 aa).

An N-terminal signal peptide occupies residues 1 to 21 (MKMHFFILLVITSWLSEKITS). A beta-D-glucoside is bound by residues glutamine 48, histidine 151, and 196–197 (NE). Glutamate 197 functions as the Proton donor in the catalytic mechanism. Cysteine 216 and cysteine 224 are joined by a disulfide. N-linked (GlcNAc...) asparagine glycosylation is found at asparagine 255 and asparagine 330. Tyrosine 340 is a binding site for a beta-D-glucoside. Asparagine 370 carries an N-linked (GlcNAc...) asparagine glycan. Glutamate 412 lines the a beta-D-glucoside pocket. Glutamate 412 (nucleophile) is an active-site residue. Asparagine 430 carries an N-linked (GlcNAc...) asparagine glycan. Residues tryptophan 462, 469 to 470 (EW), and phenylalanine 478 each bind a beta-D-glucoside. Residues asparagine 521 and asparagine 544 are each glycosylated (N-linked (GlcNAc...) asparagine).

This sequence belongs to the glycosyl hydrolase 1 family.

It carries out the reaction Hydrolysis of terminal, non-reducing beta-D-glucosyl residues with release of beta-D-glucose.. The chain is Beta-glucosidase 28 from Arabidopsis thaliana (Mouse-ear cress).